The chain runs to 445 residues: Putrescine hydroxycinnamoyltransferase 1 (445 aa).

Residues histidine 154 and aspartate 388 each act as proton acceptor in the active site.

This sequence belongs to the plant acyltransferase family. Expressed in leaves.

Its function is as follows. Hydroxycinnamoyl transferase that catalyzes the transfer of an acyl from p-coumaryol-CoA to putrescine, to produce coumaroyl putrescine. In Oryza sativa subsp. japonica (Rice), this protein is Putrescine hydroxycinnamoyltransferase 1.